The primary structure comprises 339 residues: MNSVFQGRSLLAEKDFSRAELEYLVDFSIHLKELKKKGIPHHYLEGKNIALLFEKTSTRTRSAFTTAAIDLGAHPEYLGANDIQLGKKESVEDTAIVLGSMFDGIEFRGFSQEVVEDLAKYSGVPVWNGLTDQWHPTQMIADFMTVKENFGRLEGITLVYVGDGRNNMANSLLVTGAILGVNVRICAPKELFPSDEVVNYAKEFAKESGAELMITDDVAKGVKGANVLYTDVWVSMGEEDKFEERVNLLKPYQINMAMLEKTENMDGDLIVLHCLPAFHDTKTQYGEMVAEKFGITEMEITDEVFRSKYGRQFEEAENRMHSIKAIMAATLGNLFIPRV.

Residues 57-60 (STRT), Gln84, Arg108, and 135-138 (HPTQ) each bind carbamoyl phosphate. L-ornithine is bound by residues Asn167, Asp231, and 235–236 (SM). Carbamoyl phosphate-binding positions include 274 to 275 (CL) and Arg319.

The protein belongs to the aspartate/ornithine carbamoyltransferase superfamily. OTCase family.

It localises to the cytoplasm. The catalysed reaction is carbamoyl phosphate + L-ornithine = L-citrulline + phosphate + H(+). It participates in amino-acid degradation; L-arginine degradation via ADI pathway; carbamoyl phosphate from L-arginine: step 2/2. Its function is as follows. Reversibly catalyzes the transfer of the carbamoyl group from carbamoyl phosphate (CP) to the N(epsilon) atom of ornithine (ORN) to produce L-citrulline. The protein is Ornithine carbamoyltransferase, catabolic (arcB) of Enterococcus faecalis (strain ATCC 700802 / V583).